We begin with the raw amino-acid sequence, 372 residues long: Tomoregulin-1 (372 aa).

Residues 1–36 (MGAQAPLRLPAAPPLAVCGYTSVLLLFAFCLPGSRA) form the signal peptide. Over 37–322 (SNQPAGGGGD…VPSRQKLTHV (286 aa)) the chain is Extracellular. Residue Asn-55 is glycosylated (N-linked (GlcNAc...) asparagine). A Kazal-like 1 domain is found at 90 to 137 (ACQFQCHTNYIPVCGSNGDTYQNECFLRRAACKHQKDITVVARGPCYS). 3 cysteine pairs are disulfide-bonded: Cys-91-Cys-121, Cys-95-Cys-114, and Cys-103-Cys-135. Asn-139 carries an N-linked (GlcNAc...) asparagine glycan. The interval 139–161 (NGSGSGEGEEEGSGAGAHRKHSK) is disordered. Residues 181–229 (VCNIDCSGYSFNPVCASDGSSYNNPCFVREASCIKQEQIDIRHLGHCTD) enclose the Kazal-like 2 domain. Disulfide bonds link Cys-182–Cys-213, Cys-186–Cys-206, Cys-195–Cys-227, Cys-267–Cys-280, Cys-275–Cys-291, and Cys-293–Cys-302. Residues 263–303 (SHMPCPENLNGYCIHGKCEFIYSTQKASCRCESGYTGQHCE) form the EGF-like domain. A helical transmembrane segment spans residues 323–343 (LIAAIIGAVQIAIIVAIVMCI). At 344 to 372 (TRKCPKNNRGRRQKQNLGHFTSDTSSRMV) the chain is on the cytoplasmic side. The disordered stretch occupies residues 351–372 (NRGRRQKQNLGHFTSDTSSRMV). Residues 358–372 (QNLGHFTSDTSSRMV) are compositionally biased toward polar residues.

This sequence belongs to the tomoregulin family. As to quaternary structure, may interact with ST14. As to expression, maily expressed in neurons. Expressed in brain, neurointermediate lobe, pars distalis, pancreas, ovary and testis.

It localises to the cell membrane. Neuron-specific restriction factor that prevents herpes simplex virus 1 (HHV-1) infection in the brain by blocking viral entry. Also able to restrict herpes simplex virus 2 (HHV-2) infection, although to a lesser extent. Acts by preventing the association between the viral glycoprotein D (gD) and its cell surface receptor NECTIN1, thereby inhibiting fusion of the virus and the cell membrane. Also able to prevent the association between the viral glycoprotein B (gB) and MYH9/NMMHC-IIA and MYH10/NMMHC-IIB receptors. The polypeptide is Tomoregulin-1 (Mus musculus (Mouse)).